The sequence spans 222 residues: Large ribosomal subunit protein uL4 (222 aa).

Belongs to the universal ribosomal protein uL4 family. As to quaternary structure, part of the 50S ribosomal subunit.

Its function is as follows. One of the primary rRNA binding proteins, this protein initially binds near the 5'-end of the 23S rRNA. It is important during the early stages of 50S assembly. It makes multiple contacts with different domains of the 23S rRNA in the assembled 50S subunit and ribosome. Forms part of the polypeptide exit tunnel. This is Large ribosomal subunit protein uL4 from Acidobacterium capsulatum (strain ATCC 51196 / DSM 11244 / BCRC 80197 / JCM 7670 / NBRC 15755 / NCIMB 13165 / 161).